Here is a 368-residue protein sequence, read N- to C-terminus: Microtubule-associated protein Jupiter (368 aa).

At serine 30 the chain carries Phosphoserine. At threonine 41 the chain carries Phosphothreonine. Residues 81–93 (RRGQKSVDSHSRL) show a composition bias toward basic and acidic residues. The segment at 81–106 (RRGQKSVDSHSRLFGEPSRPITPGKN) is disordered. Residue threonine 102 is modified to Phosphothreonine. Residues serine 111, serine 146, and serine 157 each carry the phosphoserine modification. Low complexity-rich tracts occupy residues 129-157 (NGNT…VSSS) and 238-248 (GRYGYSSQSRR). 3 disordered regions span residues 129 to 164 (NGNT…LKIN), 196 to 256 (SQGN…SPLN), and 316 to 368 (KPKK…SGLW). Polar residues predominate over residues 337–354 (GSDSAQTPTMNGANQVIN).

It belongs to the MAP Jupiter family.

The protein resides in the nucleus. Its subcellular location is the cytoplasm. It localises to the cytoskeleton. The protein localises to the spindle. Its function is as follows. Binds to all microtubule populations. This is Microtubule-associated protein Jupiter from Drosophila willistoni (Fruit fly).